Here is a 161-residue protein sequence, read N- to C-terminus: Protein lin-52 (161 aa).

Positions 137 to 161 are disordered; it reads TGSASPRYLQPTPPKNVAEETTGSQ.

It belongs to the lin-52 family. In terms of assembly, component of the DRM complex, at least composed of lin-9, lin-35, lin-37, lin-52, lin-53, lin-54- dpl-1 and efl-1. Interacts with zft-11; the interaction is required to suppress the activation of non-neuronal genes in neurons.

The protein resides in the nucleus. Its function is as follows. Synthetic multivulva class B (synMuvB) protein. SynMuvB proteins are required to repress the induction of vulval development by Ras signaling and probably act by forming the multiprotein DRM complex that represses transcription. In association with the zinc finger protein ztf-11, negatively regulates the expression of non-neuronal genes during neurogenesis. The polypeptide is Protein lin-52 (Caenorhabditis elegans).